Here is a 130-residue protein sequence, read N- to C-terminus: Histone H2B.1 (130 aa).

The span at 1–19 shows a compositional bias: basic and acidic residues; that stretch reads MAPKAEKKPASKAPAEKKP. Positions 1–39 are disordered; sequence MAPKAEKKPASKAPAEKKPAAKKTASATGTKKRSKTRKE. Lys7 and Lys8 each carry N6-acetyllysine; alternate. Glycyl lysine isopeptide (Lys-Gly) (interchain with G-Cter in SUMO); alternate cross-links involve residues Lys7 and Lys8. A Phosphoserine modification is found at Ser11. At Lys12 the chain carries N6-acetyllysine. An N6-acetyllysine; alternate modification is found at Lys17. Lys17 participates in a covalent cross-link: Glycyl lysine isopeptide (Lys-Gly) (interchain with G-Cter in SUMO); alternate. Lys18 is covalently cross-linked (Glycyl lysine isopeptide (Lys-Gly) (interchain with G-Cter in SUMO)). Lys124 participates in a covalent cross-link: Glycyl lysine isopeptide (Lys-Gly) (interchain with G-Cter in ubiquitin).

This sequence belongs to the histone H2B family. In terms of assembly, the nucleosome is a histone octamer containing two molecules each of H2A, H2B, H3 and H4 assembled in one H3-H4 heterotetramer and two H2A-H2B heterodimers. The octamer wraps approximately 147 bp of DNA. Monoubiquitinated by the UBC2-BRE1 complex to form H2BK123ub1. H2BK123ub1 gives a specific tag for epigenetic transcriptional activation and is also prerequisite for H3K4me and H3K79me formation. H2BK123ub1 also modulates the formation of double-strand breaks during meiosis and is a prerequisite for DNA-damage checkpoint activation. In terms of processing, phosphorylated by STE20 to form H2BS10ph during progression through meiotic prophase. May be correlated with chromosome condensation. Post-translationally, acetylated by GCN5 to form H2BK11ac and H2BK16ac. H2BK16ac can also be formed by ESA1. Acetylation of N-terminal lysines and particularly formation of H2BK11acK16ac has a positive effect on transcription. Sumoylation to form H2BK6su or H2BK7su, and probably also H2BK16su or H2BK17su, occurs preferentially near the telomeres and represses gene transcription.

It is found in the nucleus. Its subcellular location is the chromosome. In terms of biological role, core component of nucleosome. Nucleosomes wrap and compact DNA into chromatin, limiting DNA accessibility to the cellular machineries which require DNA as a template. Histones thereby play a central role in transcription regulation, DNA repair, DNA replication and chromosomal stability. DNA accessibility is regulated via a complex set of post-translational modifications of histones, also called histone code, and nucleosome remodeling. This Debaryomyces hansenii (strain ATCC 36239 / CBS 767 / BCRC 21394 / JCM 1990 / NBRC 0083 / IGC 2968) (Yeast) protein is Histone H2B.1 (HTB1).